Reading from the N-terminus, the 411-residue chain is Prophage integrase IntR (411 aa).

In terms of domain architecture, Core-binding (CB) spans 81–176; sequence KTFGELCDIW…LLCSLLRFAY (96 aa). The 208-residue stretch at 197-404 folds into the Tyr recombinase domain; that stretch reads IKPDPLSKTE…IDDMNDEQIA (208 aa). Residues Arg-231, Lys-266, Arg-358, and His-381 contribute to the active site. The active-site O-(3'-phospho-DNA)-tyrosine intermediate is the Tyr-391.

The protein belongs to the 'phage' integrase family.

Integrase is necessary for integration of the phage into the host genome by site-specific recombination. In conjunction with excisionase, integrase is also necessary for excision of the prophage from the host genome. The chain is Prophage integrase IntR (intR) from Escherichia coli (strain K12).